Reading from the N-terminus, the 194-residue chain is Prostaglandin-H2 D-isomerase (194 aa).

A signal peptide spans 1 to 24; the sequence is MAASHTLWMGLVLLGVLGVLQTRA. A Pyrrolidone carboxylic acid modification is found at glutamine 25. Asparagine 51 carries N-linked (GlcNAc...) asparagine glycosylation. Cysteine 65 serves as the catalytic Nucleophile. Asparagine 78 is a glycosylation site (N-linked (GlcNAc...) asparagine). A disulfide bridge connects residues cysteine 89 and cysteine 189.

It belongs to the calycin superfamily. Lipocalin family. As to quaternary structure, monomer. As to expression, in the male reproductive system, it is expressed in the testis and epididymis, and is secreted into the seminal fluid.

It is found in the rough endoplasmic reticulum. Its subcellular location is the nucleus membrane. The protein resides in the golgi apparatus. The protein localises to the cytoplasm. It localises to the perinuclear region. It is found in the secreted. The catalysed reaction is prostaglandin H2 = prostaglandin D2. Functionally, catalyzes the conversion of PGH2 to PGD2, a prostaglandin involved in smooth muscle contraction/relaxation and a potent inhibitor of platelet aggregation. Involved in a variety of CNS functions, such as sedation, NREM sleep and PGE2-induced allodynia, and may have an anti-apoptotic role in oligodendrocytes. Binds small non-substrate lipophilic molecules, including biliverdin, bilirubin, retinal, retinoic acid and thyroid hormone, and may act as a scavenger for harmful hydrophobic molecules and as a secretory retinoid and thyroid hormone transporter. Possibly involved in development and maintenance of the blood-brain, blood-retina, blood-aqueous humor and blood-testis barrier. It is likely to play important roles in both maturation and maintenance of the central nervous system and male reproductive system. Involved in PLA2G3-dependent maturation of mast cells. PLA2G3 is secreted by immature mast cells and acts on nearby fibroblasts upstream to PTDGS to synthesize PGD2, which in turn promotes mast cell maturation and degranulation via PTGDR. This Equus caballus (Horse) protein is Prostaglandin-H2 D-isomerase (PTGDS).